Consider the following 343-residue polypeptide: MSNFNSSPVPTIFMSFFQMTKRVRLSDSFNPVYPYEDESTSQHPFINPGFISPNGFTQSPDGVLTLKCLTPLTTTGGSLQLKVGGGLTIDDTDGFLKENISAATPLVKTGHSIGLSLGPGLGTNENKLCAKLGEGLTFNSNNICIDDNINTLWTGVNPTTANCQIMASSESNDCKLILTLVKTGGLVTAFVYVIGVSNDFNMLTTHKNINFTAELFFDSTGNLLTSLSSLKTPLNHKSGQNMATGALTNAKGFMPSTTAYPFNVNSREKENYIYGTCYYTASDHTAFPIDISVMLNQRALNNETSYCIRVTWSWNTGVAPEVQTSATTLVTSPFTFYYIREDD.

Belongs to the adenoviridae fiber family. As to quaternary structure, homotrimer. Interacts with host receptor CD46. Interacts (via N-terminal tail region) with pentons.

The protein resides in the virion. The protein localises to the host nucleus. Its function is as follows. Forms spikes that protrude from each vertex of the icosahedral capsid. Interacts with host receptor CD46 to provide virion initial attachment to target cell. Fiber proteins are shed during virus entry, when virus is still at the cell surface. In Homo sapiens (Human), this protein is Fiber protein.